The chain runs to 211 residues: Small ribosomal subunit protein uS4 (211 aa).

The S4 RNA-binding domain occupies 98-161; it reads RRLDNVVYRL…RDIPFIKENL (64 aa).

Belongs to the universal ribosomal protein uS4 family. In terms of assembly, part of the 30S ribosomal subunit. Contacts protein S5. The interaction surface between S4 and S5 is involved in control of translational fidelity.

Functionally, one of the primary rRNA binding proteins, it binds directly to 16S rRNA where it nucleates assembly of the body of the 30S subunit. With S5 and S12 plays an important role in translational accuracy. The protein is Small ribosomal subunit protein uS4 of Aquifex aeolicus (strain VF5).